The primary structure comprises 316 residues: WEB family protein At3g13190 (316 aa).

3 coiled-coil regions span residues 42 to 90 (WNKE…MIND), 119 to 195 (EEES…AEEH), and 233 to 266 (RDETLKTLEMSEREIEDIKAATQDALKKAEMAQE). The tract at residues 295 to 316 (STKEVLKSKPRSSSKEGCLVKC) is disordered.

Belongs to the WEB family.

The sequence is that of WEB family protein At3g13190 from Arabidopsis thaliana (Mouse-ear cress).